Consider the following 528-residue polypeptide: DnaJ homolog 1, mitochondrial (528 aa).

The N-terminal 66 residues, Met1–Lys66, are a transit peptide targeting the mitochondrion. The region spanning Asp86–Gly150 is the J domain. Residues Gly227–Arg308 form a CR-type zinc finger. CXXCXGXG motif repeat units lie at residues Cys240–Gly247, Cys257–Gly264, Cys280–Gly287, and Cys296–Gly303. Residues Asn455–Ser528 form a disordered region. Residues Thr462–Thr488 show a composition bias toward low complexity. Basic and acidic residues predominate over residues Leu513–Ser528.

It localises to the mitochondrion. The polypeptide is DnaJ homolog 1, mitochondrial (mdj1) (Schizosaccharomyces pombe (strain 972 / ATCC 24843) (Fission yeast)).